Here is a 298-residue protein sequence, read N- to C-terminus: Acetylglutamate kinase (298 aa).

Substrate contacts are provided by residues 69-70 (GG), Arg91, and Asn196.

It belongs to the acetylglutamate kinase family. ArgB subfamily.

The protein resides in the cytoplasm. The enzyme catalyses N-acetyl-L-glutamate + ATP = N-acetyl-L-glutamyl 5-phosphate + ADP. Its pathway is amino-acid biosynthesis; L-arginine biosynthesis; N(2)-acetyl-L-ornithine from L-glutamate: step 2/4. Functionally, catalyzes the ATP-dependent phosphorylation of N-acetyl-L-glutamate. This Rhodopseudomonas palustris (strain TIE-1) protein is Acetylglutamate kinase.